We begin with the raw amino-acid sequence, 127 residues long: Ribonuclease P protein component (127 aa).

This sequence belongs to the RnpA family. Consists of a catalytic RNA component (M1 or rnpB) and a protein subunit.

The catalysed reaction is Endonucleolytic cleavage of RNA, removing 5'-extranucleotides from tRNA precursor.. In terms of biological role, RNaseP catalyzes the removal of the 5'-leader sequence from pre-tRNA to produce the mature 5'-terminus. It can also cleave other RNA substrates such as 4.5S RNA. The protein component plays an auxiliary but essential role in vivo by binding to the 5'-leader sequence and broadening the substrate specificity of the ribozyme. This Corynebacterium urealyticum (strain ATCC 43042 / DSM 7109) protein is Ribonuclease P protein component.